We begin with the raw amino-acid sequence, 174 residues long: Adenine phosphoribosyltransferase (174 aa).

The protein belongs to the purine/pyrimidine phosphoribosyltransferase family. Homodimer.

Its subcellular location is the cytoplasm. The enzyme catalyses AMP + diphosphate = 5-phospho-alpha-D-ribose 1-diphosphate + adenine. Its pathway is purine metabolism; AMP biosynthesis via salvage pathway; AMP from adenine: step 1/1. Functionally, catalyzes a salvage reaction resulting in the formation of AMP, that is energically less costly than de novo synthesis. The polypeptide is Adenine phosphoribosyltransferase (Photobacterium profundum (strain SS9)).